Reading from the N-terminus, the 370-residue chain is UDP-galactose transporter homolog 1 (370 aa).

Helical transmembrane passes span 22 to 42, 62 to 82, 115 to 135, 145 to 165, 175 to 195, 204 to 224, 242 to 262, 280 to 300, 307 to 327, and 333 to 353; these read ALTL…WSIL, IIIN…YNYV, CNVL…SPIG, LAYL…HFIF, YLVA…HVTT, TLLG…TNST, LMSL…IIFH, LIDI…IFII, IILI…SVIL, and SWEQ…EAFI.

This sequence belongs to the nucleotide-sugar transporter family. SLC35B subfamily.

The protein localises to the endoplasmic reticulum membrane. In terms of biological role, may be involved in specific transport of UDP-Gal from the cytosol to the Golgi lumen. Involved in the maintenance of optimal conditions for the folding of secretory pathway proteins in the endoplasmic reticulum. This Candida albicans (strain SC5314 / ATCC MYA-2876) (Yeast) protein is UDP-galactose transporter homolog 1 (HUT1).